Here is a 284-residue protein sequence, read N- to C-terminus: Homoserine O-acetyltransferase 2 (284 aa).

Residue C133 is the Acyl-thioester intermediate of the active site. K154 and S178 together coordinate substrate. Residue H220 is the Proton acceptor of the active site. The active site involves E222. Residue R234 coordinates substrate.

The protein belongs to the MetA family.

The protein localises to the cytoplasm. The catalysed reaction is L-homoserine + acetyl-CoA = O-acetyl-L-homoserine + CoA. It functions in the pathway amino-acid biosynthesis; L-methionine biosynthesis via de novo pathway; O-acetyl-L-homoserine from L-homoserine: step 1/1. Transfers an acetyl group from acetyl-CoA to L-homoserine, forming acetyl-L-homoserine. The protein is Homoserine O-acetyltransferase 2 of Ilyobacter polytropus (strain ATCC 51220 / DSM 2926 / LMG 16218 / CuHBu1).